Reading from the N-terminus, the 401-residue chain is Probable E3 ubiquitin-protein ligase RHC2A (401 aa).

Residues 41-93 (TPSDSFTTTTTTQHRSPTRFPPPSSSSSTPSASMHADNSPTPTIVTRTRSNRS) are disordered. Over residues 76 to 93 (ADNSPTPTIVTRTRSNRS) the composition is skewed to polar residues. The RING-type; atypical zinc finger occupies 201–242 (CAVCKENFVLKSSAREMPCNHIYHPDCILPWLAIRNSCPVCR).

The enzyme catalyses S-ubiquitinyl-[E2 ubiquitin-conjugating enzyme]-L-cysteine + [acceptor protein]-L-lysine = [E2 ubiquitin-conjugating enzyme]-L-cysteine + N(6)-ubiquitinyl-[acceptor protein]-L-lysine.. It participates in protein modification; protein ubiquitination. Probable E3 ubiquitin-protein ligase that may possess E3 ubiquitin ligase activity in vitro. In Arabidopsis thaliana (Mouse-ear cress), this protein is Probable E3 ubiquitin-protein ligase RHC2A.